Here is a 337-residue protein sequence, read N- to C-terminus: MAIELFYDADADLSIIQGRKVAIIGYGSQGHAHAQNLRDSGVEVVIGLREGSKSAEKAKEAGFEVKTTAEAAAWANLIMILAPDTSQASIFTNDVEPNLNEGDALFFGHGLNIHFDLIKPADNIIVGMVAPKGPGHLVRRQFVDGKGVPCLIAIDQDPTGDAQALALSYASAIGGGRAGIIPTTFEAETVTDLFGEQAVLCGGTEELVKTGFEVLTEAGYEPEMAYFEVLHELKLIVDLMFEGGITNMNYSVSDTAEFGGYLSGPRVINADTKERMKDILTDIQDGTFTKRLIANVENGNTELEGLRAKYAEHPIEETGAKLRDLMSWVKNPLTETA.

Positions 3 to 183 (IELFYDADAD…GGGRAGIIPT (181 aa)) constitute a KARI N-terminal Rossmann domain. NADP(+) is bound by residues 26–29 (YGSQ), Arg-49, Ser-52, Ser-54, and 84–87 (DTSQ). Residue His-109 is part of the active site. Residue Gly-135 coordinates NADP(+). One can recognise a KARI C-terminal knotted domain in the interval 184-329 (TFEAETVTDL…AKLRDLMSWV (146 aa)). Mg(2+) contacts are provided by Asp-192, Glu-196, Glu-228, and Glu-232. Position 253 (Ser-253) interacts with substrate.

This sequence belongs to the ketol-acid reductoisomerase family. Requires Mg(2+) as cofactor.

It catalyses the reaction (2R)-2,3-dihydroxy-3-methylbutanoate + NADP(+) = (2S)-2-acetolactate + NADPH + H(+). It carries out the reaction (2R,3R)-2,3-dihydroxy-3-methylpentanoate + NADP(+) = (S)-2-ethyl-2-hydroxy-3-oxobutanoate + NADPH + H(+). It participates in amino-acid biosynthesis; L-isoleucine biosynthesis; L-isoleucine from 2-oxobutanoate: step 2/4. It functions in the pathway amino-acid biosynthesis; L-valine biosynthesis; L-valine from pyruvate: step 2/4. In terms of biological role, involved in the biosynthesis of branched-chain amino acids (BCAA). Catalyzes an alkyl-migration followed by a ketol-acid reduction of (S)-2-acetolactate (S2AL) to yield (R)-2,3-dihydroxy-isovalerate. In the isomerase reaction, S2AL is rearranged via a Mg-dependent methyl migration to produce 3-hydroxy-3-methyl-2-ketobutyrate (HMKB). In the reductase reaction, this 2-ketoacid undergoes a metal-dependent reduction by NADPH to yield (R)-2,3-dihydroxy-isovalerate. This chain is Ketol-acid reductoisomerase (NADP(+)), found in Corynebacterium efficiens (strain DSM 44549 / YS-314 / AJ 12310 / JCM 11189 / NBRC 100395).